The following is a 301-amino-acid chain: Formylmethanofuran--tetrahydromethanopterin formyltransferase (301 aa).

The protein belongs to the FTR family. As to quaternary structure, homotetramer.

It localises to the cytoplasm. It catalyses the reaction N-formylmethanofuran + 5,6,7,8-tetrahydromethanopterin + H(+) = N(5)-formyl-5,6,7,8-tetrahydromethanopterin + methanofuran. The protein operates within one-carbon metabolism; methanogenesis from CO(2); 5,10-methenyl-5,6,7,8-tetrahydromethanopterin from CO(2): step 2/3. In terms of biological role, catalyzes the reversible transfer of a formyl group from formylmethanofuran (formyl-MFR) to tetrahydromethanopterin (H(4)MPT) to produce 5-formyl tetrahydromethanopterin (5-formyl-H(4)MPT) and methanofuran (MFR). This chain is Formylmethanofuran--tetrahydromethanopterin formyltransferase, found in Methanocaldococcus jannaschii (strain ATCC 43067 / DSM 2661 / JAL-1 / JCM 10045 / NBRC 100440) (Methanococcus jannaschii).